The primary structure comprises 330 residues: D-lactate dehydrogenase (330 aa).

NAD(+) is bound by residues 155–156, Asp175, 206–207, Asn212, 233–235, and Asp259; these read RI, MP, and MAR. Residue Arg235 is part of the active site. Glu264 is a catalytic residue. The Proton donor role is filled by His296.

Belongs to the D-isomer specific 2-hydroxyacid dehydrogenase family.

It carries out the reaction (R)-lactate + NAD(+) = pyruvate + NADH + H(+). The protein is D-lactate dehydrogenase (ldhD) of Streptococcus agalactiae serotype III (strain NEM316).